The following is a 282-amino-acid chain: MIYETAPAKINFTLDTLFKRNDGYHEIEMIMTTVDLNDRLTFHKRKDRKIVVEIEHNYVPSNHKNLAYRAAQLFIEQYQLKQGVTISIDKEIPVSAGLAGGSADAAATLRGLNRLFDIGASLEELALLGSKIGTDIPFCIYNKTALCTGRGEKIEFLNKPPSAWVILAKPNLGISSPDIFKLINLDKRYDVHTKMCYEALENRDYQQLCQSLSNRLEPISVSKHPQIDKLKNNMLKSGADGALMSGSGPTVYGLARKESQAKNIYNAVNGCCNEVYLVRLLG.

K9 is a catalytic residue. ATP is bound at residue 93 to 103 (PVSAGLAGGSA). D135 is a catalytic residue.

It belongs to the GHMP kinase family. IspE subfamily.

It catalyses the reaction 4-CDP-2-C-methyl-D-erythritol + ATP = 4-CDP-2-C-methyl-D-erythritol 2-phosphate + ADP + H(+). Functionally, catalyzes the phosphorylation of the position 2 hydroxy group of 4-diphosphocytidyl-2C-methyl-D-erythritol. This Staphylococcus aureus (strain MSSA476) protein is Putative 4-diphosphocytidyl-2-C-methyl-D-erythritol kinase.